A 452-amino-acid polypeptide reads, in one-letter code: Probable glycine dehydrogenase (decarboxylating) subunit 1 (452 aa).

This sequence belongs to the GcvP family. N-terminal subunit subfamily. As to quaternary structure, the glycine cleavage system is composed of four proteins: P, T, L and H. In this organism, the P 'protein' is a heterodimer of two subunits.

It carries out the reaction N(6)-[(R)-lipoyl]-L-lysyl-[glycine-cleavage complex H protein] + glycine + H(+) = N(6)-[(R)-S(8)-aminomethyldihydrolipoyl]-L-lysyl-[glycine-cleavage complex H protein] + CO2. Functionally, the glycine cleavage system catalyzes the degradation of glycine. The P protein binds the alpha-amino group of glycine through its pyridoxal phosphate cofactor; CO(2) is released and the remaining methylamine moiety is then transferred to the lipoamide cofactor of the H protein. This Alcanivorax borkumensis (strain ATCC 700651 / DSM 11573 / NCIMB 13689 / SK2) protein is Probable glycine dehydrogenase (decarboxylating) subunit 1.